A 158-amino-acid chain; its full sequence is Small ribosomal subunit protein eS10 (158 aa).

The tract at residues 99–158 is disordered; sequence ETVRRGAVGRPDAPARSAEDRSAYRRAPTTPAAHDKKADVGPGSADLEFRGGFGRGRPAP. Positions 149–158 are enriched in gly residues; it reads GGFGRGRPAP.

The protein belongs to the eukaryotic ribosomal protein eS10 family.

It localises to the cytoplasm. The protein is Small ribosomal subunit protein eS10 (RpS10) of Spodoptera frugiperda (Fall armyworm).